The primary structure comprises 228 residues: Adapter protein MecA (228 aa).

The tract at residues 79–98 is disordered; it reads GQKNDDSAADQTDDEGTDTQ. A compositionally biased stretch (acidic residues) spans 85-95; the sequence is SAADQTDDEGT.

Belongs to the MecA family. Homodimer.

Its function is as follows. Enables the recognition and targeting of unfolded and aggregated proteins to the ClpC protease or to other proteins involved in proteolysis. The sequence is that of Adapter protein MecA from Lacticaseibacillus casei (strain BL23) (Lactobacillus casei).